Consider the following 320-residue polypeptide: MPDPMRSYLDFEKPVAELDSKIDELRALAASGSDIGEEISSIGDKAAQALKDLYANLTPWQKTQVARHPQRPHFSDFIKGLITEFTPLAGDRKFGEDEALIGGFGRFRGESICVIGQEKGATTESRLKHNFGMARPEGYRKAVRLMDMADRFDIPVLSLVDSAGAYPGIGAEERGQAEAIARSTDTCLSLGVANVAVIIGEGGSGGAIAIATASRVLMLEHAIYSVISPEAASSILWRDSSKAQEAATNMKITAQDLLRFGVIDAILKEPPGGAHRDPAATVALTGDAIAEAFNDLRNLDRDTLRKQRRQKFLDIGRKLG.

The 254-residue stretch at 42–295 (IGDKAAQALK…GDAIAEAFND (254 aa)) folds into the CoA carboxyltransferase C-terminal domain.

It belongs to the AccA family. In terms of assembly, acetyl-CoA carboxylase is a heterohexamer composed of biotin carboxyl carrier protein (AccB), biotin carboxylase (AccC) and two subunits each of ACCase subunit alpha (AccA) and ACCase subunit beta (AccD).

It localises to the cytoplasm. It carries out the reaction N(6)-carboxybiotinyl-L-lysyl-[protein] + acetyl-CoA = N(6)-biotinyl-L-lysyl-[protein] + malonyl-CoA. The protein operates within lipid metabolism; malonyl-CoA biosynthesis; malonyl-CoA from acetyl-CoA: step 1/1. Component of the acetyl coenzyme A carboxylase (ACC) complex. First, biotin carboxylase catalyzes the carboxylation of biotin on its carrier protein (BCCP) and then the CO(2) group is transferred by the carboxyltransferase to acetyl-CoA to form malonyl-CoA. The chain is Acetyl-coenzyme A carboxylase carboxyl transferase subunit alpha from Nitrobacter hamburgensis (strain DSM 10229 / NCIMB 13809 / X14).